The chain runs to 391 residues: 8-amino-7-oxononanoate synthase (391 aa).

Arginine 19 contacts substrate. Residue 106–107 (GY) participates in pyridoxal 5'-phosphate binding. Residue histidine 131 coordinates substrate. 3 residues coordinate pyridoxal 5'-phosphate: serine 178, histidine 206, and threonine 234. N6-(pyridoxal phosphate)lysine is present on lysine 237. Threonine 353 contributes to the substrate binding site.

Belongs to the class-II pyridoxal-phosphate-dependent aminotransferase family. BioF subfamily. As to quaternary structure, homodimer. Pyridoxal 5'-phosphate is required as a cofactor.

It catalyses the reaction 6-carboxyhexanoyl-[ACP] + L-alanine + H(+) = (8S)-8-amino-7-oxononanoate + holo-[ACP] + CO2. It participates in cofactor biosynthesis; biotin biosynthesis. Catalyzes the decarboxylative condensation of pimeloyl-[acyl-carrier protein] and L-alanine to produce 8-amino-7-oxononanoate (AON), [acyl-carrier protein], and carbon dioxide. The protein is 8-amino-7-oxononanoate synthase of Geobacter metallireducens (strain ATCC 53774 / DSM 7210 / GS-15).